A 127-amino-acid chain; its full sequence is Phosphoribosyl-AMP cyclohydrolase (127 aa).

Residue Asp75 coordinates Mg(2+). Cys76 is a binding site for Zn(2+). Residues Asp77 and Asp79 each contribute to the Mg(2+) site. Residues Cys93 and Cys100 each contribute to the Zn(2+) site.

It belongs to the PRA-CH family. As to quaternary structure, homodimer. Mg(2+) serves as cofactor. The cofactor is Zn(2+).

Its subcellular location is the cytoplasm. It catalyses the reaction 1-(5-phospho-beta-D-ribosyl)-5'-AMP + H2O = 1-(5-phospho-beta-D-ribosyl)-5-[(5-phospho-beta-D-ribosylamino)methylideneamino]imidazole-4-carboxamide. It functions in the pathway amino-acid biosynthesis; L-histidine biosynthesis; L-histidine from 5-phospho-alpha-D-ribose 1-diphosphate: step 3/9. Functionally, catalyzes the hydrolysis of the adenine ring of phosphoribosyl-AMP. This chain is Phosphoribosyl-AMP cyclohydrolase, found in Desulfotalea psychrophila (strain LSv54 / DSM 12343).